A 275-amino-acid chain; its full sequence is NH(3)-dependent NAD(+) synthetase (275 aa).

46–53 (GISGGQDS) is an ATP binding site. Residue Asp-52 participates in Mg(2+) binding. Arg-140 contributes to the deamido-NAD(+) binding site. Position 160 (Thr-160) interacts with ATP. Glu-165 provides a ligand contact to Mg(2+). Deamido-NAD(+) contacts are provided by Lys-173 and Asp-180. The ATP site is built by Lys-189 and Thr-211. 260–261 (HK) serves as a coordination point for deamido-NAD(+).

Belongs to the NAD synthetase family. In terms of assembly, homodimer.

It carries out the reaction deamido-NAD(+) + NH4(+) + ATP = AMP + diphosphate + NAD(+) + H(+). It participates in cofactor biosynthesis; NAD(+) biosynthesis; NAD(+) from deamido-NAD(+) (ammonia route): step 1/1. In terms of biological role, catalyzes the ATP-dependent amidation of deamido-NAD to form NAD. Uses ammonia as a nitrogen source. The polypeptide is NH(3)-dependent NAD(+) synthetase (Escherichia fergusonii (strain ATCC 35469 / DSM 13698 / CCUG 18766 / IAM 14443 / JCM 21226 / LMG 7866 / NBRC 102419 / NCTC 12128 / CDC 0568-73)).